A 229-amino-acid polypeptide reads, in one-letter code: Large ribosomal subunit protein uL1 (229 aa).

It belongs to the universal ribosomal protein uL1 family. As to quaternary structure, part of the 50S ribosomal subunit.

In terms of biological role, binds directly to 23S rRNA. The L1 stalk is quite mobile in the ribosome, and is involved in E site tRNA release. Functionally, protein L1 is also a translational repressor protein, it controls the translation of the L11 operon by binding to its mRNA. The sequence is that of Large ribosomal subunit protein uL1 from Lacticaseibacillus casei (strain BL23) (Lactobacillus casei).